The following is a 754-amino-acid chain: uncharacterized protein (754 aa).

The next 10 membrane-spanning stretches (helical) occupy residues 3-23 (ITTV…LPQL), 24-44 (PGTL…FIPV), 50-70 (IALT…ILWA), 223-243 (HLMA…AGLI), 254-274 (WIHW…YAWL), 320-340 (VAIL…LIFW), 370-390 (LLLM…SFIA), 392-412 (LLAI…AMVV), 446-466 (WINI…LLVV), and 471-491 (AWRT…WPLW).

To B.subtilis ComEC, N.gonorrhoeae ComA, and H.influenzae Rec2.

It localises to the cell membrane. This is an uncharacterized protein from Escherichia coli (strain K12).